A 234-amino-acid polypeptide reads, in one-letter code: MTENFILGRNNKLEHELKALADYINIPYSILQPYQSECFVRHYTKGQVIYFSPQESSNIYFLIEGNIIREHYNQNGDVYRYFNKEQVLFPISNLFHPKEVNELCTALTDCTVLGLPRELMAFLCKANDDIFLTLFALINDNEQQHMNYNMALTSKFAKDRIIKLICHLCQTVGYDQDEFYEIKQFLTIQLMSDMAGISRETAGHIIHELKDEKLVVKDHKNWLVSKHLFNDVCV.

A nucleoside 3',5'-cyclic phosphate is bound at residue 40–129 (VRHYTKGQVI…MAFLCKANDD (90 aa)). In terms of domain architecture, HTH crp-type spans 155-228 (KFAKDRIIKL…HKNWLVSKHL (74 aa)). The H-T-H motif DNA-binding region spans 188 to 207 (IQLMSDMAGISRETAGHIIH).

Its subcellular location is the cytoplasm. Positively regulates the expression of the arcABDCR operon under anaerobic conditions, thus playing an essential role in arginine catabolism. May also control the expression of genes encoding proteins which are involved in anaerobic metabolism. Can bind cyclic AMP. The protein is HTH-type transcriptional regulator ArcR (arcR) of Staphylococcus aureus (strain USA300 / TCH1516).